Reading from the N-terminus, the 410-residue chain is Tryptophan synthase beta chain (410 aa).

Lysine 98 carries the N6-(pyridoxal phosphate)lysine modification.

The protein belongs to the TrpB family. Tetramer of two alpha and two beta chains. Pyridoxal 5'-phosphate serves as cofactor.

The enzyme catalyses (1S,2R)-1-C-(indol-3-yl)glycerol 3-phosphate + L-serine = D-glyceraldehyde 3-phosphate + L-tryptophan + H2O. It functions in the pathway amino-acid biosynthesis; L-tryptophan biosynthesis; L-tryptophan from chorismate: step 5/5. In terms of biological role, the beta subunit is responsible for the synthesis of L-tryptophan from indole and L-serine. This Dinoroseobacter shibae (strain DSM 16493 / NCIMB 14021 / DFL 12) protein is Tryptophan synthase beta chain.